A 357-amino-acid chain; its full sequence is tRNA/tmRNA (uracil-C(5))-methyltransferase (357 aa).

S-adenosyl-L-methionine contacts are provided by Q180, Y209, N214, E230, and D290. C315 (nucleophile) is an active-site residue. Catalysis depends on E349, which acts as the Proton acceptor.

This sequence belongs to the class I-like SAM-binding methyltransferase superfamily. RNA M5U methyltransferase family. TrmA subfamily.

The enzyme catalyses uridine(54) in tRNA + S-adenosyl-L-methionine = 5-methyluridine(54) in tRNA + S-adenosyl-L-homocysteine + H(+). The catalysed reaction is uridine(341) in tmRNA + S-adenosyl-L-methionine = 5-methyluridine(341) in tmRNA + S-adenosyl-L-homocysteine + H(+). Dual-specificity methyltransferase that catalyzes the formation of 5-methyluridine at position 54 (m5U54) in all tRNAs, and that of position 341 (m5U341) in tmRNA (transfer-mRNA). The chain is tRNA/tmRNA (uracil-C(5))-methyltransferase from Campylobacter jejuni (strain RM1221).